Consider the following 217-residue polypeptide: GrpE protein homolog 1, mitochondrial (217 aa).

A mitochondrion-targeting transit peptide spans 1–27; sequence MAAQCVRLARRSLPALALSLRPSPRLL. A disordered region spans residues 29–56; that stretch reads TATKQKNSGQNLEEDMGQSEQKADPPAT. Over residues 30-39 the composition is skewed to polar residues; it reads ATKQKNSGQN. Lys94 bears the N6-acetyllysine; alternate mark. Lys94 carries the post-translational modification N6-succinyllysine; alternate. N6-acetyllysine is present on Lys100. An N6-succinyllysine modification is found at Lys120. Lys215 bears the N6-acetyllysine; alternate mark. An N6-succinyllysine; alternate modification is found at Lys215.

The protein belongs to the GrpE family. As to quaternary structure, probable component of the PAM complex at least composed of a mitochondrial HSP70 protein, GRPEL1 or GRPEL2, TIMM44, TIMM16/PAM16 and TIMM14/DNAJC19. Binds to HSP70, HSC70 and HSJ1B.

It is found in the mitochondrion matrix. Functionally, essential component of the PAM complex, a complex required for the translocation of transit peptide-containing proteins from the inner membrane into the mitochondrial matrix in an ATP-dependent manner. Seems to control the nucleotide-dependent binding of mitochondrial HSP70 to substrate proteins. In Homo sapiens (Human), this protein is GrpE protein homolog 1, mitochondrial (GRPEL1).